The sequence spans 1034 residues: Error-prone DNA polymerase (1034 aa).

The protein belongs to the DNA polymerase type-C family. DnaE2 subfamily.

Its subcellular location is the cytoplasm. The catalysed reaction is DNA(n) + a 2'-deoxyribonucleoside 5'-triphosphate = DNA(n+1) + diphosphate. In terms of biological role, DNA polymerase involved in damage-induced mutagenesis and translesion synthesis (TLS). It is not the major replicative DNA polymerase. This Pseudomonas fluorescens (strain ATCC BAA-477 / NRRL B-23932 / Pf-5) protein is Error-prone DNA polymerase.